Reading from the N-terminus, the 176-residue chain is Cytidylate kinase (176 aa).

ATP is bound at residue 7–15; it reads GPPGSGTTS.

It belongs to the cytidylate kinase family. Type 2 subfamily.

It localises to the cytoplasm. It catalyses the reaction CMP + ATP = CDP + ADP. The enzyme catalyses dCMP + ATP = dCDP + ADP. The polypeptide is Cytidylate kinase (Methanosphaerula palustris (strain ATCC BAA-1556 / DSM 19958 / E1-9c)).